A 191-amino-acid polypeptide reads, in one-letter code: Cdc42 homolog (191 aa).

Glycine 10–threonine 17 provides a ligand contact to GTP. Positions tyrosine 32 to tyrosine 40 match the Effector region motif. GTP is bound by residues aspartate 57 to glutamine 61 and threonine 115 to aspartate 118. Cysteine 188 carries the cysteine methyl ester modification. Residue cysteine 188 is the site of S-geranylgeranyl cysteine attachment. The propeptide at lysine 189–leucine 191 is removed in mature form.

The protein belongs to the small GTPase superfamily. Rho family. CDC42 subfamily.

The protein resides in the cell junction. The protein localises to the adherens junction. It is found in the cell membrane. It carries out the reaction GTP + H2O = GDP + phosphate + H(+). Regulates mbt kinase activity and is also required to recruit mbt to adherens junctions. Together with mbt, regulates photoreceptor cell morphogenesis. The protein is Cdc42 homolog of Drosophila pseudoobscura pseudoobscura (Fruit fly).